A 468-amino-acid chain; its full sequence is Cyclin-dependent kinase 14 (468 aa).

3 positions are modified to phosphoserine: Ser24, Ser77, and Ser94. The disordered stretch occupies residues 103–132 (KTSSAGKESPKVRRHSSPSSPTSPKFGKAD). Ser133 is modified (phosphoserine). A Protein kinase domain is found at 134 to 418 (YEKLEKLGEG…AQAALSHEYF (285 aa)). Residues 140 to 148 (LGEGSYATV) and Lys163 each bind ATP. Residue Asp255 is the Proton acceptor of the active site. The segment at 448 to 468 (ESMRAFGKNNSYGKSLSNSKH) is disordered. Positions 455–468 (KNNSYGKSLSNSKH) are enriched in polar residues.

The protein belongs to the protein kinase superfamily. CMGC Ser/Thr protein kinase family. CDC2/CDKX subfamily. In terms of assembly, found in a complex with LRP6, CCNY and CAPRIN2 during G2/M stage; CAPRIN2 functions as a scaffold for the complex by binding to CCNY via its N terminus and to CDK14 via its C terminus. Interacts with CCNY; CCNY mediates its recruitment to the plasma membrane and promotes phosphorylation of LRP6. Interacts with CCDN3 and CDKN1A. Interacts with SEPT8. Interacts with 14-3-3 proteina YWHAB, YWHAE, YWHAH and YWHAQ.

Its subcellular location is the cell membrane. It is found in the cytoplasm. It localises to the nucleus. The catalysed reaction is L-seryl-[protein] + ATP = O-phospho-L-seryl-[protein] + ADP + H(+). It carries out the reaction L-threonyl-[protein] + ATP = O-phospho-L-threonyl-[protein] + ADP + H(+). Its activity is regulated as follows. Serine/threonine-protein kinase activity is promoted by associated cyclins CCDN3 and CCNY and repressed by CDKN1A. In terms of biological role, serine/threonine-protein kinase involved in the control of the eukaryotic cell cycle, whose activity is controlled by an associated cyclin. Acts as a cell-cycle regulator of Wnt signaling pathway during G2/M phase by mediating the phosphorylation of LRP6 at 'Ser-1490', leading to the activation of the Wnt signaling pathway. Acts as a regulator of cell cycle progression and cell proliferation via its interaction with CCDN3. Phosphorylates RB1 in vitro, however the relevance of such result remains to be confirmed in vivo. May also play a role in meiosis, neuron differentiation and may indirectly act as a negative regulator of insulin-responsive glucose transport. The polypeptide is Cyclin-dependent kinase 14 (CDK14) (Dasypus novemcinctus (Nine-banded armadillo)).